The sequence spans 360 residues: Phospho-N-acetylmuramoyl-pentapeptide-transferase (360 aa).

10 consecutive transmembrane segments (helical) span residues 21–41 (YITV…LWIG), 73–93 (TMGG…WANL), 94–114 (ANPY…IGFV), 132–152 (WKYF…YWLG), 168–188 (IMPQ…VGTG), 199–219 (GLAI…AWAT), 239–259 (VVVF…FNTY), 263–283 (VFMG…VAIL), 288–308 (FLLV…ILQV), and 338–358 (VIIR…VTLK).

Belongs to the glycosyltransferase 4 family. MraY subfamily. Requires Mg(2+) as cofactor.

Its subcellular location is the cell inner membrane. It catalyses the reaction UDP-N-acetyl-alpha-D-muramoyl-L-alanyl-gamma-D-glutamyl-meso-2,6-diaminopimeloyl-D-alanyl-D-alanine + di-trans,octa-cis-undecaprenyl phosphate = di-trans,octa-cis-undecaprenyl diphospho-N-acetyl-alpha-D-muramoyl-L-alanyl-D-glutamyl-meso-2,6-diaminopimeloyl-D-alanyl-D-alanine + UMP. It functions in the pathway cell wall biogenesis; peptidoglycan biosynthesis. Functionally, catalyzes the initial step of the lipid cycle reactions in the biosynthesis of the cell wall peptidoglycan: transfers peptidoglycan precursor phospho-MurNAc-pentapeptide from UDP-MurNAc-pentapeptide onto the lipid carrier undecaprenyl phosphate, yielding undecaprenyl-pyrophosphoryl-MurNAc-pentapeptide, known as lipid I. The polypeptide is Phospho-N-acetylmuramoyl-pentapeptide-transferase (Haemophilus influenzae (strain PittEE)).